The chain runs to 45 residues: Protamine Z2 (45 aa).

Over residues 1–23 (MKCGRKRRRRRRHACKRKKRACK) the composition is skewed to basic residues. The segment at 1–26 (MKCGRKRRRRRRHACKRKKRACKQRS) is disordered.

Testis.

It localises to the nucleus. It is found in the chromosome. In terms of biological role, protamines substitute for histones in the chromatin of sperm during the haploid phase of spermatogenesis. They compact sperm DNA into a highly condensed, stable and inactive complex. This Scyliorhinus canicula (Small-spotted catshark) protein is Protamine Z2.